The sequence spans 306 residues: uncharacterized protein (306 aa).

Residues 287 to 306 form a disordered region; the sequence is DEEGKSEDAKRQEEEKKKSS.

It belongs to the aldo/keto reductase family.

It is found in the cytoplasm. Its subcellular location is the nucleus. This is an uncharacterized protein from Schizosaccharomyces pombe (strain 972 / ATCC 24843) (Fission yeast).